A 144-amino-acid chain; its full sequence is Large ribosomal subunit protein uL15 (144 aa).

The tract at residues 1-52 (MIKLESLQDPSPRKRRKKLLGRGPGSGHGKTSGRGHKGDGSRSGYKRRFGYE) is disordered. Positions 22–32 (RGPGSGHGKTS) are enriched in gly residues.

The protein belongs to the universal ribosomal protein uL15 family. In terms of assembly, part of the 50S ribosomal subunit.

Binds to the 23S rRNA. In Chlamydia felis (strain Fe/C-56) (Chlamydophila felis), this protein is Large ribosomal subunit protein uL15.